A 162-amino-acid chain; its full sequence is Caveolin-2 (162 aa).

Over Met-1 to Lys-86 the chain is Cytoplasmic. A Phosphotyrosine; by SRC modification is found at Tyr-19. 2 positions are modified to phosphoserine: Ser-20 and Ser-23. Tyr-27 is subject to Phosphotyrosine; by SRC. Phosphoserine is present on Ser-36. The helical intramembrane region spans Phe-87–Leu-107. Residues Ser-108–Asp-162 lie on the Cytoplasmic side of the membrane.

It belongs to the caveolin family. In terms of assembly, monomer or homodimer. Interacts with CAV1; the interaction forms a stable heterooligomeric complex that is required for targeting to lipid rafts and for caveolae formation. Tyrosine phosphorylated forms do not form heterooligomers with the Tyr-19-phosphorylated form existing as a monomer or dimer, and the Tyr-27-form as a monomer only. Interacts (tyrosine phosphorylated form) with the SH2 domain-containing proteins, RASA1, NCK1 and SRC. Interacts (tyrosine phosphorylated form) with INSR, the interaction (Tyr-27-phosphorylated form) is increased on insulin stimulation. Interacts (Tyr-19 phosphorylated form) with MAPK1 (phosphorylated form); the interaction, promoted by insulin, leads to nuclear location and MAPK1 activation. Interacts with STAT3; the interaction is increased on insulin-induced tyrosine phosphorylation leading to STAT activation. In terms of processing, phosphorylated on serine and tyrosine residues. CAV1 promotes phosphorylation on Ser-23 which then targets the complex to the plasma membrane, lipid rafts and caveolae. Phosphorylation on Ser-36 appears to modulate mitosis in endothelial cells. Phosphorylation on both Tyr-19 and Tyr-27 is required for insulin-induced 'Ser-727' phosphorylation of STAT3 and its activation. Phosphorylation on Tyr-19 is required for insulin-induced phosphorylation of MAPK1 and DNA binding of STAT3. Tyrosine phosphorylation is induced by both EGF and insulin (By. similarity).

The protein localises to the nucleus. Its subcellular location is the cytoplasm. The protein resides in the golgi apparatus membrane. It localises to the cell membrane. It is found in the membrane. The protein localises to the caveola. May act as a scaffolding protein within caveolar membranes. Interacts directly with G-protein alpha subunits and can functionally regulate their activity. Acts as an accessory protein in conjunction with CAV1 in targeting to lipid rafts and driving caveolae formation. The Ser-36 phosphorylated form has a role in modulating mitosis in endothelial cells. Positive regulator of cellular mitogenesis of the MAPK signaling pathway. Required for the insulin-stimulated nuclear translocation and activation of MAPK1 and STAT3, and the subsequent regulation of cell cycle progression. The protein is Caveolin-2 (CAV2) of Carollia perspicillata (Seba's short-tailed bat).